Here is a 493-residue protein sequence, read N- to C-terminus: 3-octaprenyl-4-hydroxybenzoate carboxy-lyase (493 aa).

Asn-172 is a Mn(2+) binding site. Prenylated FMN-binding positions include 175-177, 189-191, and 194-195; these read IYR, RWL, and RG. Glu-238 lines the Mn(2+) pocket. Residue Asp-287 is the Proton donor of the active site.

The protein belongs to the UbiD family. As to quaternary structure, homohexamer. The cofactor is prenylated FMN. Requires Mn(2+) as cofactor.

Its subcellular location is the cell membrane. The catalysed reaction is a 4-hydroxy-3-(all-trans-polyprenyl)benzoate + H(+) = a 2-(all-trans-polyprenyl)phenol + CO2. Its pathway is cofactor biosynthesis; ubiquinone biosynthesis. Catalyzes the decarboxylation of 3-octaprenyl-4-hydroxy benzoate to 2-octaprenylphenol, an intermediate step in ubiquinone biosynthesis. The polypeptide is 3-octaprenyl-4-hydroxybenzoate carboxy-lyase (Shewanella denitrificans (strain OS217 / ATCC BAA-1090 / DSM 15013)).